A 391-amino-acid polypeptide reads, in one-letter code: Stearoyl-[acyl-carrier-protein] 9-desaturase 6, chloroplastic (391 aa).

A chloroplast-targeting transit peptide spans 1–38 (MLAHKSLLSFTTQWATLMPSPSTFLASRPRGPAKISAV). Residues Glu130, Glu168, His171, Glu221, Glu254, and His257 each contribute to the Fe cation site.

It belongs to the fatty acid desaturase type 2 family. Homodimer. Fe(2+) serves as cofactor.

It localises to the plastid. The protein resides in the chloroplast. The catalysed reaction is octadecanoyl-[ACP] + 2 reduced [2Fe-2S]-[ferredoxin] + O2 + 2 H(+) = (9Z)-octadecenoyl-[ACP] + 2 oxidized [2Fe-2S]-[ferredoxin] + 2 H2O. It participates in lipid metabolism; fatty acid metabolism. Converts stearoyl-ACP to oleoyl-ACP by introduction of a cis double bond between carbons 9 and 10 of the acyl chain. This is Stearoyl-[acyl-carrier-protein] 9-desaturase 6, chloroplastic (S-ACP-DES6) from Arabidopsis thaliana (Mouse-ear cress).